The primary structure comprises 299 residues: Delta-9 desaturase-like 2 protein (299 aa).

A helical membrane pass occupies residues 55–75 (WEAFRFGIILAILTNLCITFS). The Histidine box-1 signature appears at 77–82 (HRNLTH). The Histidine box-2 signature appears at 114-118 (HRFHH). The chain crosses the membrane as a helical span at residues 174–194 (LVLHILAFWTLIYLWGGLPYL). The Histidine box-3 motif lies at 246 to 250 (HNNHH). The helical transmembrane segment at 262 to 282 (WYQLDITWYLIWFFQALGLAT) threads the bilayer.

This sequence belongs to the fatty acid desaturase type 1 family. Fe cation is required as a cofactor.

The protein resides in the endoplasmic reticulum membrane. Its pathway is lipid metabolism; polyunsaturated fatty acid biosynthesis. In Arabidopsis thaliana (Mouse-ear cress), this protein is Delta-9 desaturase-like 2 protein.